A 317-amino-acid chain; its full sequence is E3 ubiquitin-protein ligase NRDP1 (317 aa).

The segment at 18–57 adopts an RING-type; degenerate zinc-finger fold; sequence CPICSGVLEEPVQAPHCEHAFCNACITQWFSQQQTCPVDR. The SIAH-type; degenerate zinc-finger motif lies at 78–138; the sequence is KLQIACDNAV…LPNHNCIKHL (61 aa).

In terms of assembly, interacts with USP8, ERBB3, PRKN and BIRC6. Interacts with CSF2RB, EPOR, IL3RA, MYD88 and TBK1. Interacts with CLEC16A. Post-translationally, autoubiquitinated. Autoubiquitination leads to proteasomal degradation. Deubiquitinated by USP8 to get stabilized which induces apoptosis. In terms of tissue distribution, detected in ovary, testis and prostate.

The catalysed reaction is S-ubiquitinyl-[E2 ubiquitin-conjugating enzyme]-L-cysteine + [acceptor protein]-L-lysine = [E2 ubiquitin-conjugating enzyme]-L-cysteine + N(6)-ubiquitinyl-[acceptor protein]-L-lysine.. It participates in protein modification; protein ubiquitination. Acts as E3 ubiquitin-protein ligase and regulates the degradation of target proteins. Polyubiquitinates MYD88. Negatively regulates MYD88-dependent production of pro-inflammatory cytokines. Can promote TRIF-dependent production of type I interferon and inhibits infection with vesicular stomatitis virus. Promotes also activation of TBK1 and IRF3. Involved in the ubiquitination of erythropoietin (EPO) and interleukin-3 (IL-3) receptors. Thus, through maintaining basal levels of cytokine receptors, RNF41 is involved in the control of hematopoietic progenitor cell differentiation into myeloerythroid lineages. Contributes to the maintenance of steady-state ERBB3 levels by mediating its growth factor-independent degradation. Involved in the degradation of the inhibitor of apoptosis BIRC6 and thus is an important regulator of cell death by promoting apoptosis. Also acts as a PRKN modifier that accelerates its degradation, resulting in a reduction of PRKN activity, influencing the balance of intracellular redox state. The RNF41-PRKN pathway regulates autophagosome-lysosome fusion during late mitophagy. Mitophagy is a selective form of autophagy necessary for mitochondrial quality control. In Homo sapiens (Human), this protein is E3 ubiquitin-protein ligase NRDP1 (RNF41).